Here is a 241-residue protein sequence, read N- to C-terminus: Trypsin-1 (241 aa).

The signal sequence occupies residues 1–13 (MKSLIFVLLLGAV). Residues 14–19 (FAEEDK) constitute a propeptide, activation peptide. The Peptidase S1 domain maps to 20–239 (IVGGYECTKH…LSGWVRDTMA (220 aa)). Cystine bridges form between Cys26/Cys155, Cys44/Cys60, Cys128/Cys228, Cys135/Cys201, Cys166/Cys180, and Cys191/Cys215. Catalysis depends on charge relay system residues His59 and Asp103. The Charge relay system role is filled by Ser195.

The protein belongs to the peptidase S1 family.

It localises to the secreted. Its subcellular location is the extracellular space. The enzyme catalyses Preferential cleavage: Arg-|-Xaa, Lys-|-Xaa.. The polypeptide is Trypsin-1 (Gadus morhua (Atlantic cod)).